The sequence spans 490 residues: GTPase Der (490 aa).

EngA-type G domains are found at residues Pro-3–Met-166 and Ile-200–Thr-373. Residues Gly-9–Ser-16, Asp-56–Ile-60, Asn-118–Asp-121, Gly-206–Ser-213, Asp-253–Val-257, and Asn-318–Asp-321 contribute to the GTP site. The 85-residue stretch at Arg-374–Gly-458 folds into the KH-like domain.

Belongs to the TRAFAC class TrmE-Era-EngA-EngB-Septin-like GTPase superfamily. EngA (Der) GTPase family. As to quaternary structure, associates with the 50S ribosomal subunit.

GTPase that plays an essential role in the late steps of ribosome biogenesis. The polypeptide is GTPase Der (Shewanella piezotolerans (strain WP3 / JCM 13877)).